The sequence spans 791 residues: uncharacterized protein (791 aa).

The helical transmembrane segment at 10 to 30 threads the bilayer; sequence LLTITIGAVAVSSILLGGIFY. Residues 56–76 are compositionally biased toward basic and acidic residues; sequence NLDYQKARPSIKDNNLKEIPK. Residues 56-175 form a disordered region; sequence NLDYQKARPS…PQPQQIPNQS (120 aa). Residues 77-97 show a composition bias toward pro residues; it reads PKPQPKPEPQPTPFPDPIPTP. The segment covering 98–124 has biased composition (basic and acidic residues); the sequence is PKKEELKKPEIKPEEPKKPEIKPEPIP. A compositionally biased stretch (pro residues) spans 125 to 139; sequence KPKPQPIPQPTPPVE.

The protein to U.parvum UU044.

The protein localises to the membrane. This is an uncharacterized protein from Ureaplasma parvum serovar 3 (strain ATCC 700970).